The chain runs to 547 residues: 2-succinyl-5-enolpyruvyl-6-hydroxy-3-cyclohexene-1-carboxylate synthase (547 aa).

It belongs to the TPP enzyme family. MenD subfamily. As to quaternary structure, homodimer. Mg(2+) serves as cofactor. It depends on Mn(2+) as a cofactor. Requires thiamine diphosphate as cofactor.

It carries out the reaction isochorismate + 2-oxoglutarate + H(+) = 5-enolpyruvoyl-6-hydroxy-2-succinyl-cyclohex-3-ene-1-carboxylate + CO2. The protein operates within quinol/quinone metabolism; 1,4-dihydroxy-2-naphthoate biosynthesis; 1,4-dihydroxy-2-naphthoate from chorismate: step 2/7. It participates in quinol/quinone metabolism; menaquinone biosynthesis. In terms of biological role, catalyzes the thiamine diphosphate-dependent decarboxylation of 2-oxoglutarate and the subsequent addition of the resulting succinic semialdehyde-thiamine pyrophosphate anion to isochorismate to yield 2-succinyl-5-enolpyruvyl-6-hydroxy-3-cyclohexene-1-carboxylate (SEPHCHC). This is 2-succinyl-5-enolpyruvyl-6-hydroxy-3-cyclohexene-1-carboxylate synthase from Mycobacterium sp. (strain JLS).